The following is a 474-amino-acid chain: Stabilizer of axonemal microtubules 1 (474 aa).

12 mn regions span residues 30–64 (KPCL…KGSI), 65–97 (PMEG…PSEE), 98–131 (NMDL…PYSN), 132–165 (KMEY…PASV), 166–199 (RFDN…LCNI), 200–232 (PLED…PCEI), 233–266 (PFES…GLDM), 267–299 (PFSN…PPED), 300–332 (SMDL…RKSG), 333–366 (RFEG…FPTE), 367–400 (PLDC…RGNV), and 401–434 (PVEG…TFEE). A disordered region spans residues 318-350 (PARSCRPAPQIRKSGRFEGSSTTKDDYKQWSSM). The segment at 444–474 (KPVSQAGSQQSSHLSVDDSENPSQRKLEVSA) is disordered. Residues 448–457 (QAGSQQSSHL) are compositionally biased toward polar residues.

It belongs to the FAM154 family. Associates with microtubules via the Mn regions.

Its subcellular location is the cytoplasm. The protein localises to the cytoskeleton. It localises to the microtubule organizing center. It is found in the centrosome. The protein resides in the centriole. Its subcellular location is the cilium basal body. The protein localises to the cilium axoneme. It localises to the flagellum axoneme. In terms of biological role, may play a role in the regulation of cilium length. Stabilizes microtubules at low temperature. The sequence is that of Stabilizer of axonemal microtubules 1 (SAXO1) from Macaca fascicularis (Crab-eating macaque).